The primary structure comprises 598 residues: Elongation factor 4 (598 aa).

The 183-residue stretch at 5–187 folds into the tr-type G domain; the sequence is ANIRNFSIIA…ALVEFIPAPT (183 aa). GTP contacts are provided by residues 17-22 and 134-137; these read DHGKST and NKID.

It belongs to the TRAFAC class translation factor GTPase superfamily. Classic translation factor GTPase family. LepA subfamily.

The protein localises to the cell inner membrane. It catalyses the reaction GTP + H2O = GDP + phosphate + H(+). Required for accurate and efficient protein synthesis under certain stress conditions. May act as a fidelity factor of the translation reaction, by catalyzing a one-codon backward translocation of tRNAs on improperly translocated ribosomes. Back-translocation proceeds from a post-translocation (POST) complex to a pre-translocation (PRE) complex, thus giving elongation factor G a second chance to translocate the tRNAs correctly. Binds to ribosomes in a GTP-dependent manner. The protein is Elongation factor 4 of Psychrobacter arcticus (strain DSM 17307 / VKM B-2377 / 273-4).